Consider the following 712-residue polypeptide: Elongation factor G (712 aa).

The tr-type G domain maps to 8–290; that stretch reads TRYRNIGISA…AVIEFLPSPT (283 aa). GTP is bound by residues 17–24, 88–92, and 142–145; these read AHIDAGKT, DTPGH, and NKMD.

It belongs to the TRAFAC class translation factor GTPase superfamily. Classic translation factor GTPase family. EF-G/EF-2 subfamily.

The protein localises to the cytoplasm. In terms of biological role, catalyzes the GTP-dependent ribosomal translocation step during translation elongation. During this step, the ribosome changes from the pre-translocational (PRE) to the post-translocational (POST) state as the newly formed A-site-bound peptidyl-tRNA and P-site-bound deacylated tRNA move to the P and E sites, respectively. Catalyzes the coordinated movement of the two tRNA molecules, the mRNA and conformational changes in the ribosome. This Acinetobacter baumannii (strain AB307-0294) protein is Elongation factor G.